Here is a 99-residue protein sequence, read N- to C-terminus: Small ribosomal subunit protein bS20 (99 aa).

The protein belongs to the bacterial ribosomal protein bS20 family.

Its function is as follows. Binds directly to 16S ribosomal RNA. This Prochlorococcus marinus (strain SARG / CCMP1375 / SS120) protein is Small ribosomal subunit protein bS20.